Consider the following 135-residue polypeptide: Probable transcription factor At2g20613 (135 aa).

The segment at Met1–Ala104 is disordered. Over residues Asp28–Ser41 the composition is skewed to acidic residues. Residues Lys62 to Glu80 show a composition bias toward basic and acidic residues.

It belongs to the GeBP family.

In Arabidopsis thaliana (Mouse-ear cress), this protein is Probable transcription factor At2g20613.